Consider the following 129-residue polypeptide: Small ribosomal subunit protein uS11 (129 aa).

The protein belongs to the universal ribosomal protein uS11 family. As to quaternary structure, part of the 30S ribosomal subunit. Interacts with proteins S7 and S18. Binds to IF-3.

In terms of biological role, located on the platform of the 30S subunit, it bridges several disparate RNA helices of the 16S rRNA. Forms part of the Shine-Dalgarno cleft in the 70S ribosome. This Oleidesulfovibrio alaskensis (strain ATCC BAA-1058 / DSM 17464 / G20) (Desulfovibrio alaskensis) protein is Small ribosomal subunit protein uS11.